We begin with the raw amino-acid sequence, 82 residues long: Defensin-like protein 22 (82 aa).

The first 24 residues, Met-1–Gly-24, serve as a signal peptide directing secretion. 4 disulfides stabilise this stretch: Cys-34-Cys-82, Cys-44-Cys-69, Cys-53-Cys-78, and Cys-57-Cys-80.

Belongs to the DEFL family.

The protein resides in the secreted. The chain is Defensin-like protein 22 from Arabidopsis thaliana (Mouse-ear cress).